The following is a 361-amino-acid chain: Collagenase (361 aa).

This sequence belongs to the peptidase U32 family. As to quaternary structure, homodimer. The cofactor is a metal cation.

Its activity is regulated as follows. Activity somewhat enhanced by calcium ions, inhibited by zinc and Fe(3+) ions and by p-chloromercuribenzoic acid and EDTA. Activity is enhanced by salivary peptide cystatin and reduced by salivary peptide histatin. Functionally, has collagenase activity. Active on soluble collagen, reconstituted type I collagen, heat denatured type I collagen and azocoll, but not gelatin or the synthetic bacterial collagenase substrate PZ-PLGPA. May play a role in virulence. This Porphyromonas gingivalis (Bacteroides gingivalis) protein is Collagenase.